Here is a 342-residue protein sequence, read N- to C-terminus: Deoxyguanosinetriphosphate triphosphohydrolase-like protein (342 aa).

The HD domain maps to 75–190 (RLVHTLEVSQ…VRFADKIAYV (116 aa)).

Belongs to the dGTPase family. Type 2 subfamily.

The sequence is that of Deoxyguanosinetriphosphate triphosphohydrolase-like protein from Clostridium perfringens (strain SM101 / Type A).